Consider the following 500-residue polypeptide: NAD(P)H-quinone oxidoreductase chain 4, chloroplastic (500 aa).

Transmembrane regions (helical) follow at residues 4-24 (FPWL…IFFL), 37-57 (ICIC…HFQL), 87-107 (IGPI…AWPI), 113-130 (LFHF…GSFS), 134-154 (LLLF…LLAM), 167-187 (FILY…GVAL), 208-228 (VLEI…LPII), 242-262 (HYST…YGLI), 272-292 (AHSI…IYAA), 305-325 (IAYS…SLTD), 330-350 (GALL…FLAG), 386-406 (LALP…GIIT), 411-431 (VLIP…LTPI), and 462-482 (LFLS…PDFV).

Belongs to the complex I subunit 4 family.

It localises to the plastid. The protein localises to the chloroplast thylakoid membrane. It catalyses the reaction a plastoquinone + NADH + (n+1) H(+)(in) = a plastoquinol + NAD(+) + n H(+)(out). The enzyme catalyses a plastoquinone + NADPH + (n+1) H(+)(in) = a plastoquinol + NADP(+) + n H(+)(out). The chain is NAD(P)H-quinone oxidoreductase chain 4, chloroplastic from Atropa belladonna (Belladonna).